The sequence spans 465 residues: Ribulose bisphosphate carboxylase large chain (465 aa).

Lys4 is modified (N6,N6,N6-trimethyllysine). Positions 113 and 163 each coordinate substrate. Catalysis depends on Lys165, which acts as the Proton acceptor. Substrate is bound at residue Lys167. 3 residues coordinate Mg(2+): Lys191, Asp193, and Glu194. Lys191 is subject to N6-carboxylysine. His284 serves as the catalytic Proton acceptor. Arg285, His317, and Ser369 together coordinate substrate.

Belongs to the RuBisCO large chain family. Type I subfamily. As to quaternary structure, heterohexadecamer of 8 large chains and 8 small chains; disulfide-linked. The disulfide link is formed within the large subunit homodimers. Mg(2+) serves as cofactor. In terms of processing, the disulfide bond which can form in the large chain dimeric partners within the hexadecamer appears to be associated with oxidative stress and protein turnover.

The protein localises to the plastid. It localises to the chloroplast. It carries out the reaction 2 (2R)-3-phosphoglycerate + 2 H(+) = D-ribulose 1,5-bisphosphate + CO2 + H2O. The catalysed reaction is D-ribulose 1,5-bisphosphate + O2 = 2-phosphoglycolate + (2R)-3-phosphoglycerate + 2 H(+). In terms of biological role, ruBisCO catalyzes two reactions: the carboxylation of D-ribulose 1,5-bisphosphate, the primary event in carbon dioxide fixation, as well as the oxidative fragmentation of the pentose substrate in the photorespiration process. Both reactions occur simultaneously and in competition at the same active site. This Passiflora quadrangularis (Grenadine) protein is Ribulose bisphosphate carboxylase large chain.